We begin with the raw amino-acid sequence, 309 residues long: Homoserine O-succinyltransferase (309 aa).

C142 serves as the catalytic Acyl-thioester intermediate. 2 residues coordinate substrate: K163 and S192. H235 (proton acceptor) is an active-site residue. Residue E237 is part of the active site. R249 contacts substrate.

This sequence belongs to the MetA family.

Its subcellular location is the cytoplasm. It carries out the reaction L-homoserine + succinyl-CoA = O-succinyl-L-homoserine + CoA. It functions in the pathway amino-acid biosynthesis; L-methionine biosynthesis via de novo pathway; O-succinyl-L-homoserine from L-homoserine: step 1/1. In terms of biological role, transfers a succinyl group from succinyl-CoA to L-homoserine, forming succinyl-L-homoserine. In Enterobacter sp. (strain 638), this protein is Homoserine O-succinyltransferase.